A 131-amino-acid polypeptide reads, in one-letter code: MTDPIADYLTRLRNAIGAKHRVVEVPASNLKKEITKILFEKGYILNYKFVEDGPQGTIKVALKYDSVNKVNAIKKLERVSSPGMRKYTGYKDMPRVINGLGIAIISTSKGVMTNKEAAELKIGGEVLCYVY.

The protein belongs to the universal ribosomal protein uS8 family. Part of the 30S ribosomal subunit. Contacts proteins S5 and S12.

In terms of biological role, one of the primary rRNA binding proteins, it binds directly to 16S rRNA central domain where it helps coordinate assembly of the platform of the 30S subunit. The sequence is that of Small ribosomal subunit protein uS8 from Bacteroides thetaiotaomicron (strain ATCC 29148 / DSM 2079 / JCM 5827 / CCUG 10774 / NCTC 10582 / VPI-5482 / E50).